Here is a 327-residue protein sequence, read N- to C-terminus: Phenylalanine--tRNA ligase alpha subunit (327 aa).

Glu252 serves as a coordination point for Mg(2+).

This sequence belongs to the class-II aminoacyl-tRNA synthetase family. Phe-tRNA synthetase alpha subunit type 1 subfamily. Tetramer of two alpha and two beta subunits. Mg(2+) is required as a cofactor.

It localises to the cytoplasm. The enzyme catalyses tRNA(Phe) + L-phenylalanine + ATP = L-phenylalanyl-tRNA(Phe) + AMP + diphosphate + H(+). The polypeptide is Phenylalanine--tRNA ligase alpha subunit (Yersinia pseudotuberculosis serotype O:1b (strain IP 31758)).